We begin with the raw amino-acid sequence, 360 residues long: GDSL esterase/lipase At2g31550 (360 aa).

Positions 1-27 (MSTSKAITLTLFITTTLLASCDAAANA) are cleaved as a signal peptide. N26 is a glycosylation site (N-linked (GlcNAc...) asparagine). The active-site Nucleophile is S42. N-linked (GlcNAc...) asparagine glycosylation is found at N104 and N326. Active-site residues include D334 and H337.

It belongs to the 'GDSL' lipolytic enzyme family.

Its subcellular location is the secreted. The protein is GDSL esterase/lipase At2g31550 of Arabidopsis thaliana (Mouse-ear cress).